A 257-amino-acid chain; its full sequence is Acetylglutamate kinase (257 aa).

Residues 43 to 44 (GG), R65, and N157 contribute to the substrate site.

The protein belongs to the acetylglutamate kinase family. ArgB subfamily.

Its subcellular location is the cytoplasm. The enzyme catalyses N-acetyl-L-glutamate + ATP = N-acetyl-L-glutamyl 5-phosphate + ADP. It functions in the pathway amino-acid biosynthesis; L-arginine biosynthesis; N(2)-acetyl-L-ornithine from L-glutamate: step 2/4. Functionally, catalyzes the ATP-dependent phosphorylation of N-acetyl-L-glutamate. This Mannheimia succiniciproducens (strain KCTC 0769BP / MBEL55E) protein is Acetylglutamate kinase.